A 277-amino-acid polypeptide reads, in one-letter code: Urease accessory protein UreD (277 aa).

The protein belongs to the UreD family. As to quaternary structure, ureD, UreF and UreG form a complex that acts as a GTP-hydrolysis-dependent molecular chaperone, activating the urease apoprotein by helping to assemble the nickel containing metallocenter of UreC. The UreE protein probably delivers the nickel.

It is found in the cytoplasm. Functionally, required for maturation of urease via the functional incorporation of the urease nickel metallocenter. In Pseudomonas putida (strain ATCC 47054 / DSM 6125 / CFBP 8728 / NCIMB 11950 / KT2440), this protein is Urease accessory protein UreD.